Reading from the N-terminus, the 218-residue chain is Probable 3-keto-L-gulonate-6-phosphate decarboxylase (218 aa).

Aspartate 11 contributes to the substrate binding site. Positions 33 and 62 each coordinate Mg(2+). Arginine 194 is a substrate binding site.

This sequence belongs to the HPS/KGPDC family. KGPDC subfamily. Requires Mg(2+) as cofactor.

The enzyme catalyses 3-dehydro-L-gulonate 6-phosphate + H(+) = L-xylulose 5-phosphate + CO2. It participates in cofactor degradation; L-ascorbate degradation; D-xylulose 5-phosphate from L-ascorbate: step 2/4. Functionally, catalyzes the decarboxylation of 3-keto-L-gulonate-6-P into L-xylulose-5-P. Is involved in the anaerobic L-ascorbate utilization. The protein is Probable 3-keto-L-gulonate-6-phosphate decarboxylase (ulaD) of Mycoplasma pneumoniae (strain ATCC 29342 / M129 / Subtype 1) (Mycoplasmoides pneumoniae).